Here is a 44-residue protein sequence, read N- to C-terminus: uncharacterized protein (44 aa).

A helical membrane pass occupies residues 4 to 24 (ISSILIRGGGVLIVVILLLWI).

The protein localises to the membrane. This is an uncharacterized protein from Ornithodoros (relapsing fever ticks).